We begin with the raw amino-acid sequence, 269 residues long: 5'-nucleotidase SurE (269 aa).

Positions 8, 9, 40, and 95 each coordinate a divalent metal cation.

It belongs to the SurE nucleotidase family. A divalent metal cation serves as cofactor.

It is found in the cytoplasm. The catalysed reaction is a ribonucleoside 5'-phosphate + H2O = a ribonucleoside + phosphate. In terms of biological role, nucleotidase that shows phosphatase activity on nucleoside 5'-monophosphates. This Nitratidesulfovibrio vulgaris (strain DSM 19637 / Miyazaki F) (Desulfovibrio vulgaris) protein is 5'-nucleotidase SurE.